A 71-amino-acid chain; its full sequence is Disintegrin applaggin (71 aa).

The 71-residue stretch at 1–71 folds into the Disintegrin domain; sequence EAGEECDCGS…SAGCPRNPFH (71 aa). Cystine bridges form between C6–C21, C8–C16, C15–C38, C29–C35, C34–C58, and C47–C65. A Cell attachment site motif is present at residues 50-52; that stretch reads RGD.

This sequence belongs to the venom metalloproteinase (M12B) family. P-II subfamily. P-IIa sub-subfamily. In terms of assembly, monomer (disintegrin). Expressed by the venom gland.

Its subcellular location is the secreted. Functionally, inhibits fibrinogen interaction with platelets. Acts by binding to alpha-IIb/beta-3 (ITGA2B/ITGB3) on the platelet surface and inhibits aggregation induced by ADP, thrombin, platelet-activating factor and collagen. The sequence is that of Disintegrin applaggin from Agkistrodon piscivorus piscivorus (Eastern cottonmouth).